A 365-amino-acid polypeptide reads, in one-letter code: Delta(7)-sterol 5(6)-desaturase ERG3 (365 aa).

The Cytoplasmic portion of the chain corresponds to Met-1 to Glu-92. Residues Phe-93–Ser-113 traverse the membrane as a helical segment. Over Leu-114 to Lys-140 the chain is Lumenal. The helical transmembrane segment at Leu-141 to Leu-161 threads the bilayer. Over Asn-162–Tyr-242 the chain is Cytoplasmic. The Fatty acid hydroxylase domain maps to Thr-187–Gly-311. Residues His-200 to His-204 carry the Histidine box-1 motif. Residues His-213–His-217 carry the Histidine box-2 motif. The chain crosses the membrane as a helical span at residues His-243–Val-263. Residues Asn-264–Asn-365 lie on the Lumenal side of the membrane. The Histidine box-3 motif lies at His-288–His-292. Glycyl lysine isopeptide (Lys-Gly) (interchain with G-Cter in ubiquitin) cross-links involve residues Lys-324 and Lys-344.

This sequence belongs to the sterol desaturase family. Interacts with ERG28. Fe cation is required as a cofactor.

It is found in the endoplasmic reticulum membrane. It catalyses the reaction episterol + 2 Fe(II)-[cytochrome b5] + O2 + 2 H(+) = 5-dehydroepisterol + 2 Fe(III)-[cytochrome b5] + 2 H2O. It participates in steroid metabolism; ergosterol biosynthesis; ergosterol from zymosterol: step 3/5. Its function is as follows. C-5 sterol desaturase; part of the third module of ergosterol biosynthesis pathway that includes the late steps of the pathway. ERG3 catalyzes the introduction of a C-5 double bond in the B ring to produce 5-dehydroepisterol. The third module or late pathway involves the ergosterol synthesis itself through consecutive reactions that mainly occur in the endoplasmic reticulum (ER) membrane. Firstly, the squalene synthase ERG9 catalyzes the condensation of 2 farnesyl pyrophosphate moieties to form squalene, which is the precursor of all steroids. Squalene synthase is crucial for balancing the incorporation of farnesyl diphosphate (FPP) into sterol and nonsterol isoprene synthesis. Secondly, the squalene epoxidase ERG1 catalyzes the stereospecific oxidation of squalene to (S)-2,3-epoxysqualene, which is considered to be a rate-limiting enzyme in steroid biosynthesis. Then, the lanosterol synthase ERG7 catalyzes the cyclization of (S)-2,3 oxidosqualene to lanosterol, a reaction that forms the sterol core. In the next steps, lanosterol is transformed to zymosterol through a complex process involving various demethylation, reduction and desaturation reactions. The lanosterol 14-alpha-demethylase ERG11 (also known as CYP51) catalyzes C14-demethylation of lanosterol to produce 4,4'-dimethyl cholesta-8,14,24-triene-3-beta-ol, which is critical for ergosterol biosynthesis. The C-14 reductase ERG24 reduces the C14=C15 double bond of 4,4-dimethyl-cholesta-8,14,24-trienol to produce 4,4-dimethyl-cholesta-8,24-dienol. 4,4-dimethyl-cholesta-8,24-dienol is substrate of the C-4 demethylation complex ERG25-ERG26-ERG27 in which ERG25 catalyzes the three-step monooxygenation required for the demethylation of 4,4-dimethyl and 4alpha-methylsterols, ERG26 catalyzes the oxidative decarboxylation that results in a reduction of the 3-beta-hydroxy group at the C-3 carbon to an oxo group, and ERG27 is responsible for the reduction of the keto group on the C-3. ERG28 has a role as a scaffold to help anchor ERG25, ERG26 and ERG27 to the endoplasmic reticulum and ERG29 regulates the activity of the iron-containing C4-methylsterol oxidase ERG25. Then, the sterol 24-C-methyltransferase ERG6 catalyzes the methyl transfer from S-adenosyl-methionine to the C-24 of zymosterol to form fecosterol. The C-8 sterol isomerase ERG2 catalyzes the reaction which results in unsaturation at C-7 in the B ring of sterols and thus converts fecosterol to episterol. The sterol-C5-desaturase ERG3 then catalyzes the introduction of a C-5 double bond in the B ring to produce 5-dehydroepisterol. The C-22 sterol desaturase ERG5 further converts 5-dehydroepisterol into ergosta-5,7,22,24(28)-tetraen-3beta-ol by forming the C-22(23) double bond in the sterol side chain. Finally, ergosta-5,7,22,24(28)-tetraen-3beta-ol is substrate of the C-24(28) sterol reductase ERG4 to produce ergosterol. The sequence is that of Delta(7)-sterol 5(6)-desaturase ERG3 from Saccharomyces cerevisiae (strain ATCC 204508 / S288c) (Baker's yeast).